The sequence spans 164 residues: Phosphopantetheine adenylyltransferase (164 aa).

Substrate is bound at residue Ser-9. ATP-binding positions include 9–10 (SF) and His-17. Positions 41, 78, and 92 each coordinate substrate. ATP contacts are provided by residues 93–95 (GLR), Glu-103, and 128–134 (VRTITAT).

The protein belongs to the bacterial CoaD family. Homohexamer. Mg(2+) is required as a cofactor.

It localises to the cytoplasm. The catalysed reaction is (R)-4'-phosphopantetheine + ATP + H(+) = 3'-dephospho-CoA + diphosphate. The protein operates within cofactor biosynthesis; coenzyme A biosynthesis; CoA from (R)-pantothenate: step 4/5. In terms of biological role, reversibly transfers an adenylyl group from ATP to 4'-phosphopantetheine, yielding dephospho-CoA (dPCoA) and pyrophosphate. This chain is Phosphopantetheine adenylyltransferase, found in Brucella abortus (strain 2308).